Reading from the N-terminus, the 706-residue chain is Polyribonucleotide nucleotidyltransferase (706 aa).

2 residues coordinate Mg(2+): aspartate 487 and aspartate 493. The KH domain occupies 553-612 (PRLFTMKINQDKIREVIGKGGETIRAITAETGTEINIAEDGTITIAATTQEAGDAAKKRI). An S1 motif domain is found at 622–692 (GKVYEGTVVK…DRGRVRLSIK (71 aa)).

It belongs to the polyribonucleotide nucleotidyltransferase family. Mg(2+) serves as cofactor.

The protein resides in the cytoplasm. The catalysed reaction is RNA(n+1) + phosphate = RNA(n) + a ribonucleoside 5'-diphosphate. Involved in mRNA degradation. Catalyzes the phosphorolysis of single-stranded polyribonucleotides processively in the 3'- to 5'-direction. The polypeptide is Polyribonucleotide nucleotidyltransferase (Neisseria meningitidis serogroup A / serotype 4A (strain DSM 15465 / Z2491)).